A 250-amino-acid chain; its full sequence is MSQAAMTPAEFEQALRAKGALYHIHHPFHRAMYEGRATREQIQGWVANRFYYQVNIPLKDAAILANCPDRETRREWIQRILDHDGAPGEEGGIEAWLRLAESVGLDREQVLSQELVLPGVRFAVDAYVNFARRASWQEAASSSLTELFAPTIHQSRLDAWPQHYPWIDAAGYDYFRNRLSQARRDVEHGLRITLEHYRTRDAQEHMLNILQFKLDVLWSMLDAMSMAYELERPPYHTVTAERVWHKGIDL.

Belongs to the PqqC family.

It carries out the reaction 6-(2-amino-2-carboxyethyl)-7,8-dioxo-1,2,3,4,7,8-hexahydroquinoline-2,4-dicarboxylate + 3 O2 = pyrroloquinoline quinone + 2 H2O2 + 2 H2O + H(+). It participates in cofactor biosynthesis; pyrroloquinoline quinone biosynthesis. Its function is as follows. Ring cyclization and eight-electron oxidation of 3a-(2-amino-2-carboxyethyl)-4,5-dioxo-4,5,6,7,8,9-hexahydroquinoline-7,9-dicarboxylic-acid to PQQ. This chain is Pyrroloquinoline-quinone synthase, found in Ectopseudomonas mendocina (strain ymp) (Pseudomonas mendocina).